The following is a 648-amino-acid chain: RAF proto-oncogene serine/threonine-protein kinase (648 aa).

A Phosphoserine; by MAPK1 modification is found at Ser29. The residue at position 43 (Ser43) is a Phosphoserine. The RBD domain maps to 56–131 (NTIRVFLPNK…IGEELQVDFL (76 aa)). Residues 138–184 (THNFARKTFLKLAFCDICQKFLLNGFRCQTCGYKFHEHCSTKVPTMC) form a Phorbol-ester/DAG-type zinc finger. Zn(2+) is bound by residues His139, Cys152, Cys155, Cys165, Cys168, His173, Cys176, and Cys184. The segment at 217–335 (MRESVSRMPA…EKNKIRPRGQ (119 aa)) is disordered. At Ser233 the chain carries Phosphoserine; by PKA. Residues 239-271 (TFNTSSPSSEGSLSQRQRSTSTPNVHMVSTTLP) are compositionally biased toward polar residues. Phosphoserine occurs at positions 252 and 259. Position 268 is a phosphothreonine; by autocatalysis (Thr268). Thr269 carries the phosphothreonine; by PKA modification. A compositionally biased stretch (basic and acidic residues) spans 275–285 (RMIEDAIRSHS). Low complexity predominate over residues 286–301 (ESASPSALSSSPNNLS). Residues Ser289, Ser296, and Ser301 each carry the phosphoserine; by MAPK1 modification. The interval 331–349 (RPRGQRDSSYYWEIEASEV) is interaction with PEBP1/RKIP. Ser338 carries the post-translational modification Phosphoserine; by PAK1, PAK2, PAK3 and PAK5. Ser339 is subject to Phosphoserine; by PAK1, PAK2 and PAK3. Phosphotyrosine; by SRC occurs at positions 340 and 341. A Protein kinase domain is found at 349–609 (VMLSTRIGSG…PQILSSIELL (261 aa)). Residues 355 to 363 (IGSGSFGTV) and Lys375 contribute to the ATP site. Asp468 serves as the catalytic Proton acceptor. A Phosphoserine modification is found at Ser471. At Thr491 the chain carries Phosphothreonine. The residue at position 494 (Ser494) is a Phosphoserine. Phosphoserine; by PKC occurs at positions 497 and 499. The residue at position 563 (Arg563) is a Symmetric dimethylarginine; by PRMT5. The residue at position 621 (Ser621) is a Phosphoserine. Ser642 bears the Phosphoserine; by MAPK1 mark.

It belongs to the protein kinase superfamily. TKL Ser/Thr protein kinase family. RAF subfamily. In terms of assembly, monomer. Homodimer. Heterodimerizes with BRAF and this heterodimer possesses a highly increased kinase activity compared to the respective homodimers or monomers. Heterodimerization is mitogen-regulated and enhanced by 14-3-3 proteins. MAPK1/ERK2 activation can induce a negative feedback that promotes the dissociation of the heterodimer. Forms a multiprotein complex with Ras (M-Ras/MRAS), SHOC2 and protein phosphatase 1 (PPP1CA, PPP1CB and PPP1CC). Interacts with LZTR1. Interacts with Ras proteins; the interaction is antagonized by RIN1. Weakly interacts with RIT1. Interacts with STK3/MST2; the interaction inhibits its pro-apoptotic activity. Interacts (when phosphorylated at Ser-259) with YWHAZ (unphosphorylated at 'Thr-232'). Interacts with MAP3K5/ASF1 (via N-terminus) and this interaction inhibits the proapoptotic function of MAP3K5/ASK1. Interacts with PAK1 (via kinase domain). The phosphorylated form interacts with PIN1. The Ser-338 and Ser-339 phosphorylated form (by PAK1) interacts with BCL2. Interacts with PEBP1/RKIP and this interaction is enhanced if RAF1 is phosphorylated on residues Ser-338, Ser-339, Tyr-340 and Tyr-341. Interacts with ADCY2, ADCY5, ADCY6, DGKH, RCAN1/DSCR1, PPP1R12A, PKB/AKT1, PPP2CA, PPP2R1B, SPRY2, SPRY4, CNKSR1/CNK1, KSR2 and PHB/prohibitin. Interacts with ROCK2. Interacts (via N-terminus) with RGS14 (via RBD domains); the interaction mediates the formation of a ternary complex with BRAF, a ternary complex inhibited by GNAI1. Probably forms a complex composed of chaperones HSP90 and HSP70, co-chaperones CDC37, PPP5C, TSC1 and client protein TSC2, CDK4, AKT, RAF1 and NR3C1; this complex does not contain co-chaperones STIP1/HOP and PTGES3/p23. Interacts with MAP2K1/MEK1 and MAP2K2/MEK2. In its active form, interacts with PRMT5. Interacts with FAM83B; displaces 14-3-3 proteins from RAF1 and activates RAF1. Interacts with PDE8A; the interaction promotes RAF1 activity. Interacts with MFHAS1. Interacts with GLS. Interacts with YWHAZ. Interacts with NEK10 and MAP2K1; the interaction is direct with NEK10 and required for ERK1/2-signaling pathway activation in response to UV irradiation. It depends on Zn(2+) as a cofactor. In terms of processing, phosphorylation at Thr-269, Ser-338, Tyr-341, Thr-491 and Ser-494 results in its activation. Phosphorylation at Ser-29, Ser-43, Ser-289, Ser-296, Ser-301 and Ser-642 by MAPK1/ERK2 results in its inactivation. Phosphorylation at Ser-259 induces the interaction with YWHAZ and inactivates kinase activity. Dephosphorylation of Ser-259 by the SHOC2-MRAS-PP1c (SMP) complex consisting of SHOC2, GTP-bound M-Ras/MRAS and the catalytic subunit of protein phosphatase 1 (PPP1CA, PPP1CB or PPP1CC); this relieves inactivation and stimulates kinase activity. Phosphorylation at Ser-338 by PAK1 and PAK5 and Ser-339 by PAK1 is required for its mitochondrial localization. Phosphorylation at Ser-621 in response to growth factor treatment stabilizes the protein, possibly by preventing proteasomal degradation. Phosphorylation at Ser-289, Ser-296, Ser-301, Ser-338 and Ser-621 are somehow linked to the methylation potential of cells. Treatment of cells with HGF in the presence of the methylation inhibitor 5'-methylthioadenosine (MTA) results in increased phosphorylation at Ser-338 and Ser-621 and decreased phosphorylation at Ser-296, Ser-301 and Ser-338. Dephosphorylation at Ser-338 by PPP5C results in a decreased of activity. Methylated in response to EGF treatment. This modification leads to destabilization of the protein, possibly through proteasomal degradation.

Its subcellular location is the cytoplasm. The protein localises to the cell membrane. It is found in the mitochondrion. The protein resides in the nucleus. The catalysed reaction is L-seryl-[protein] + ATP = O-phospho-L-seryl-[protein] + ADP + H(+). It carries out the reaction L-threonyl-[protein] + ATP = O-phospho-L-threonyl-[protein] + ADP + H(+). Regulation is a highly complex process involving membrane recruitment, protein-protein interactions, dimerization, and phosphorylation/dephosphorylation events. Ras-GTP recruits RAF1 to the membrane, thereby promoting its activation. The inactive conformation of RAF1 is maintained by autoinhibitory interactions occurring between the N-terminal regulatory and the C-terminal catalytic domains and by the binding of a 14-3-3 protein that contacts two phosphorylation sites, Ser-259 and Ser-621. Upon mitogenic stimulation, Ras and PPP2R1A cooperate to release autoinhibition and the subsequent phosphorylation of activating sites: Ser-338, Tyr-341, Thr-491, and Ser-494, yields a fully active kinase. Through a negative feedback mechanism involving MAPK1/ERK2, RAF1 is phosphorylated on Ser-29, Ser-43, Ser-289, Ser-296, Ser-301 and Ser-642 by MAPK1/ERK2, which yields an inactive, desensitized kinase. The signaling-competent conformation of RAF1 is finally re-established by the coordinated action of PIN1, a prolyl isomerase that converts pSer and pThr residues from the cis to the trans conformation, which is preferentially recognized and dephosphorylated by PPP2R1A. Activated by homodimerization and heterodimerization (with BRAF). Also regulated through association with other proteins such as KSR2, CNKSR1/CNK1, PEBP1/RKIP, PHB/prohibitin and SPRY4. PEBP1/RKIP acts by dissociating RAF1 from its substrates MAP2K1/MEK1 and MAP2K2/MEK2. PHB/prohibitin facilitates the displacement of 14-3-3 from RAF1 by activated Ras, thereby promoting cell membrane localization and phosphorylation of RAF1 at the activating Ser-338. SPRY4 inhibits Ras-independent, but not Ras-dependent, activation of RAF1. CNKSR1/CNK1 regulates Src-mediated RAF1 activation. In terms of biological role, serine/threonine-protein kinase that acts as a regulatory link between the membrane-associated Ras GTPases and the MAPK/ERK cascade, and this critical regulatory link functions as a switch determining cell fate decisions including proliferation, differentiation, apoptosis, survival and oncogenic transformation. RAF1 activation initiates a mitogen-activated protein kinase (MAPK) cascade that comprises a sequential phosphorylation of the dual-specific MAPK kinases (MAP2K1/MEK1 and MAP2K2/MEK2) and the extracellular signal-regulated kinases (MAPK3/ERK1 and MAPK1/ERK2). The phosphorylated form of RAF1 (on residues Ser-338 and Ser-339, by PAK1) phosphorylates BAD/Bcl2-antagonist of cell death at 'Ser-75'. Phosphorylates adenylyl cyclases: ADCY2, ADCY5 and ADCY6, resulting in their activation. Phosphorylates PPP1R12A resulting in inhibition of the phosphatase activity. Can promote NF-kB activation and inhibit signal transducers involved in motility (ROCK2), apoptosis (MAP3K5/ASK1 and STK3/MST2), proliferation and angiogenesis (RB1). Can protect cells from apoptosis also by translocating to the mitochondria where it binds BCL2 and displaces BAD/Bcl2-antagonist of cell death. Regulates Rho signaling and migration, and is required for normal wound healing. Plays a role in the oncogenic transformation of epithelial cells via repression of the TJ protein, occludin (OCLN) by inducing the up-regulation of a transcriptional repressor SNAI2/SLUG, which induces down-regulation of OCLN. Restricts caspase activation in response to selected stimuli, notably Fas stimulation, pathogen-mediated macrophage apoptosis, and erythroid differentiation. Phosphorylates TNNT2/cardiac muscle troponin T. The polypeptide is RAF proto-oncogene serine/threonine-protein kinase (Raf1) (Rattus norvegicus (Rat)).